Consider the following 501-residue polypeptide: Aspartate--tRNA ligase, cytoplasmic (501 aa).

The residue at position 52 (T52) is a Phosphothreonine. K74 is modified (N6-acetyllysine). E229 provides a ligand contact to L-aspartate. S249 carries the phosphoserine modification. Residues 251 to 254 (QLYK) are aspartate. R273 serves as a coordination point for L-aspartate. ATP contacts are provided by residues 273–275 (RAE) and 281–283 (RHL). K374 carries the post-translational modification N6-acetyllysine. The segment at 411–415 (KQSNS) is binding site for the 3'-end of tRNA. Position 424 (E424) interacts with ATP. L-aspartate-binding residues include S427 and R431. 472 to 475 (GLER) provides a ligand contact to ATP. Position 500 is a phosphothreonine; by PKA (T500).

It belongs to the class-II aminoacyl-tRNA synthetase family. Type 2 subfamily. Homodimer. Part of a multisubunit complex that groups tRNA ligases for Arg (RARS1), Asp (DARS1), Gln (QARS1), Ile (IARS1), Leu (LARS1), Lys (KARS1), Met (MARS1) the bifunctional ligase for Glu and Pro (EPRS1) and the auxiliary subunits AIMP1/p43, AIMP2/p38 and EEF1E1/p18.

It is found in the cytoplasm. It carries out the reaction tRNA(Asp) + L-aspartate + ATP = L-aspartyl-tRNA(Asp) + AMP + diphosphate. In terms of biological role, catalyzes the specific attachment of an amino acid to its cognate tRNA in a 2 step reaction: the amino acid (AA) is first activated by ATP to form AA-AMP and then transferred to the acceptor end of the tRNA. This Pongo abelii (Sumatran orangutan) protein is Aspartate--tRNA ligase, cytoplasmic (DARS1).